The primary structure comprises 360 residues: Farnesyl pyrophosphate synthase (360 aa).

Isopentenyl diphosphate contacts are provided by lysine 52, arginine 55, and glutamine 90. Mg(2+)-binding residues include aspartate 97 and aspartate 101. Arginine 106 is a binding site for dimethylallyl diphosphate. Arginine 107 contributes to the isopentenyl diphosphate binding site. The dimethylallyl diphosphate site is built by lysine 194, threonine 195, glutamine 237, lysine 254, and lysine 263.

It belongs to the FPP/GGPP synthase family. Requires Mg(2+) as cofactor.

It catalyses the reaction isopentenyl diphosphate + dimethylallyl diphosphate = (2E)-geranyl diphosphate + diphosphate. The catalysed reaction is isopentenyl diphosphate + (2E)-geranyl diphosphate = (2E,6E)-farnesyl diphosphate + diphosphate. The protein operates within isoprenoid biosynthesis; farnesyl diphosphate biosynthesis; farnesyl diphosphate from geranyl diphosphate and isopentenyl diphosphate: step 1/1. It participates in isoprenoid biosynthesis; geranyl diphosphate biosynthesis; geranyl diphosphate from dimethylallyl diphosphate and isopentenyl diphosphate: step 1/1. Its function is as follows. Farnesyl pyrophosphate synthase; part of the second module of ergosterol biosynthesis pathway that includes the middle steps of the pathway. The second module involves the formation of farnesyl diphosphate, which is also an important intermediate in the biosynthesis of ubiquinone, dolichol, heme and prenylated proteins. This module also plays a key role in the biosynthesis of triterpenes such as ganoderic acids (GA), a group of highly oxygenated lanostane-type triterpenoids which are well recognized as a main group of unique bioactive compounds in the medicinal mushroom Ganoderma lucidum. Activity by the mevalonate kinase first converts mevalonate into 5-phosphomevalonate. 5-phosphomevalonate is then further converted to 5-diphosphomevalonate by the phosphomevalonate kinase. The diphosphomevalonate decarboxylase MVD then produces isopentenyl diphosphate. The isopentenyl-diphosphate delta-isomerase then catalyzes the 1,3-allylic rearrangement of the homoallylic substrate isopentenyl (IPP) to its highly electrophilic allylic isomer, dimethylallyl diphosphate (DMAPP). Finally the farnesyl diphosphate synthase FPS catalyzes the sequential condensation of isopentenyl pyrophosphate with dimethylallyl pyrophosphate, and then with the resultant geranylpyrophosphate to the ultimate product farnesyl pyrophosphate. This is Farnesyl pyrophosphate synthase from Ganoderma lucidum (Ling zhi medicinal fungus).